A 255-amino-acid polypeptide reads, in one-letter code: 7alpha-hydroxysteroid dehydrogenase (255 aa).

NAD(+) is bound by residues Ile-23, 42–43 (DI), 68–69 (DI), and Asn-95. 4 residues coordinate glycochenodeoxycholate: Gly-99, Ser-146, Asn-151, and Tyr-159. Residues Tyr-159, Lys-163, and 192 to 194 (ILT) contribute to the NAD(+) site. Tyr-159 (proton acceptor) is an active-site residue.

The protein belongs to the short-chain dehydrogenases/reductases (SDR) family. As to quaternary structure, homotetramer.

The enzyme catalyses cholate + NAD(+) = 3alpha,12alpha-dihydroxy-7-oxo-5beta-cholanate + NADH + H(+). It carries out the reaction chenodeoxycholate + NAD(+) = 7-oxolithocholate + NADH + H(+). The catalysed reaction is taurochenodeoxycholate + NAD(+) = 7-oxotaurolithocholate + NADH + H(+). It catalyses the reaction taurocholate + NAD(+) = 7-oxo-taurodeoxycholate + NADH + H(+). The enzyme catalyses glycocholate + NAD(+) = 7-oxo-glycodeoxycholate + NADH + H(+). It carries out the reaction glycochenodeoxycholate + NAD(+) = 7-oxoglycolithocholate + NADH + H(+). In terms of biological role, 7alpha-hydroxysteroid dehydrogenase involved in the metabolism of bile acids. Catalyzes the NAD(+)-dependent oxidation of the 7alpha-hydroxy group of 7alpha-hydroxysteroids, such as the major human bile acids cholate and chenodeoxycholate, to the corresponding 7-oxosteroids. To a lesser extent, can also act on taurochenodeoxycholate, taurocholate and glycocholate. Can also use glycochenodeoxycholate as substrate. Is not able to use NADP(+) instead of NAD(+) as the electron acceptor. The sequence is that of 7alpha-hydroxysteroid dehydrogenase (hdhA) from Escherichia coli O157:H7.